The following is a 396-amino-acid chain: Actin-related protein 6 (396 aa).

It belongs to the actin family. ARP6 subfamily. In terms of assembly, interacts with CBX1 and CBX3.

The protein resides in the cytoplasm. The protein localises to the cytoskeleton. Its subcellular location is the nucleus. It localises to the nucleolus. Functionally, required for formation and/or maintenance of the proper nucleolar structure and function. Plays a dual role in the regulation of ribosomal DNA (rDNA) transcription. In the presence of high glucose, it maintains active rDNA transcription through H2A.Z deposition and under glucose starvation, is required for the repression of rDNA transcription, and this function may be independent of H2A.Z. The sequence is that of Actin-related protein 6 (ACTR6) from Gallus gallus (Chicken).